The sequence spans 250 residues: Probable chemoreceptor glutamine deamidase CheD (250 aa).

This sequence belongs to the CheD family.

The catalysed reaction is L-glutaminyl-[protein] + H2O = L-glutamyl-[protein] + NH4(+). Its function is as follows. Probably deamidates glutamine residues to glutamate on methyl-accepting chemotaxis receptors (MCPs), playing an important role in chemotaxis. The protein is Probable chemoreceptor glutamine deamidase CheD of Paraburkholderia xenovorans (strain LB400).